The chain runs to 393 residues: Glutamyl-tRNA reductase (393 aa).

Substrate contacts are provided by residues 47–50 (TCSR), Ser98, 103–105 (ETD), and Gln109. The active-site Nucleophile is Cys48. 177–182 (GAGAVG) lines the NADP(+) pocket.

It belongs to the glutamyl-tRNA reductase family. In terms of assembly, homodimer.

The catalysed reaction is (S)-4-amino-5-oxopentanoate + tRNA(Glu) + NADP(+) = L-glutamyl-tRNA(Glu) + NADPH + H(+). It participates in porphyrin-containing compound metabolism; protoporphyrin-IX biosynthesis; 5-aminolevulinate from L-glutamyl-tRNA(Glu): step 1/2. Functionally, catalyzes the NADPH-dependent reduction of glutamyl-tRNA(Glu) to glutamate 1-semialdehyde (GSA). This Pyrobaculum neutrophilum (strain DSM 2338 / JCM 9278 / NBRC 100436 / V24Sta) (Thermoproteus neutrophilus) protein is Glutamyl-tRNA reductase.